The primary structure comprises 492 residues: Trehalose-phosphatase (492 aa).

The interval Met1 to Asp55 is disordered. Positions Gln17–Ala43 are enriched in basic and acidic residues. Mg(2+)-binding residues include Asp213 and Asp215. Asp215 (proton donor/acceptor) is an active-site residue. Gln332–Lys334 is a binding site for substrate. Asp424 contacts Mg(2+).

It belongs to the gob-1 trehalose phosphatase family. Requires Mg(2+) as cofactor.

The enzyme catalyses alpha,alpha-trehalose 6-phosphate + H2O = alpha,alpha-trehalose + phosphate. With respect to regulation, inhibited by trehalose 6-sulfate. In terms of biological role, catalyzes the hydrolysis of trehalose 6-phosphate to trehalose and phosphate; prevents the accumulation of toxic levels of trehalose 6-phosphate. This is Trehalose-phosphatase from Brugia malayi (Filarial nematode worm).